The primary structure comprises 85 residues: Follicular dendritic cell secreted peptide (85 aa).

The signal sequence occupies residues Met-1–Gly-17. The tract at residues Ser-75 to Ser-83 is O-glycosylated at one site.

O-glycosylated with core 1 or possibly core 8 glycans. As to expression, abundantly expressed in tonsil, lymph node, and trachea; strong expression in prostate; lower expression in thyroid, stomach, and colon.

The protein localises to the secreted. Can bind to the surface of B-lymphoma cells, but not T-lymphoma cells, consistent with a function as a secreted mediator acting upon B-cells. The protein is Follicular dendritic cell secreted peptide (FDCSP) of Homo sapiens (Human).